Reading from the N-terminus, the 313-residue chain is tRNA-cytidine(32) 2-sulfurtransferase (313 aa).

The short motif at 46-51 (SGGKDS) is the PP-loop motif element. Residues C121, C124, and C212 each contribute to the [4Fe-4S] cluster site.

It belongs to the TtcA family. In terms of assembly, homodimer. Requires Mg(2+) as cofactor. [4Fe-4S] cluster serves as cofactor.

The protein localises to the cytoplasm. The enzyme catalyses cytidine(32) in tRNA + S-sulfanyl-L-cysteinyl-[cysteine desulfurase] + AH2 + ATP = 2-thiocytidine(32) in tRNA + L-cysteinyl-[cysteine desulfurase] + A + AMP + diphosphate + H(+). The protein operates within tRNA modification. Its function is as follows. Catalyzes the ATP-dependent 2-thiolation of cytidine in position 32 of tRNA, to form 2-thiocytidine (s(2)C32). The sulfur atoms are provided by the cysteine/cysteine desulfurase (IscS) system. This chain is tRNA-cytidine(32) 2-sulfurtransferase, found in Nitrosomonas eutropha (strain DSM 101675 / C91 / Nm57).